The chain runs to 178 residues: Interleukin-10 (178 aa).

The signal sequence occupies residues 1–18; sequence MPGSALLCCLLLLAGVKT. N-linked (GlcNAc...) asparagine glycosylation occurs at asparagine 29. Cystine bridges form between cysteine 30/cysteine 126 and cysteine 80/cysteine 132. Residue asparagine 134 is glycosylated (N-linked (GlcNAc...) asparagine).

Belongs to the IL-10 family. In terms of assembly, homodimer. Interacts with IL10RA and IL10RB.

It localises to the secreted. Functionally, major immune regulatory cytokine that acts on many cells of the immune system where it has profound anti-inflammatory functions, limiting excessive tissue disruption caused by inflammation. Mechanistically, IL10 binds to its heterotetrameric receptor comprising IL10RA and IL10RB leading to JAK1 and STAT2-mediated phosphorylation of STAT3. In turn, STAT3 translocates to the nucleus where it drives expression of anti-inflammatory mediators. Targets antigen-presenting cells (APCs) such as macrophages and monocytes and inhibits their release of pro-inflammatory cytokines including granulocyte-macrophage colony-stimulating factor /GM-CSF, granulocyte colony-stimulating factor/G-CSF, IL-1 alpha, IL-1 beta, IL-6, IL-8 and TNF-alpha. Also interferes with antigen presentation by reducing the expression of MHC-class II and co-stimulatory molecules, thereby inhibiting their ability to induce T cell activation. In addition, controls the inflammatory response of macrophages by reprogramming essential metabolic pathways including mTOR signaling. This is Interleukin-10 (Il10) from Rattus norvegicus (Rat).